A 387-amino-acid polypeptide reads, in one-letter code: 4-hydroxy-3-methylbut-2-en-1-yl diphosphate synthase (flavodoxin) (387 aa).

4 residues coordinate [4Fe-4S] cluster: cysteine 280, cysteine 283, cysteine 315, and glutamate 322.

The protein belongs to the IspG family. [4Fe-4S] cluster is required as a cofactor.

The enzyme catalyses (2E)-4-hydroxy-3-methylbut-2-enyl diphosphate + oxidized [flavodoxin] + H2O + 2 H(+) = 2-C-methyl-D-erythritol 2,4-cyclic diphosphate + reduced [flavodoxin]. It participates in isoprenoid biosynthesis; isopentenyl diphosphate biosynthesis via DXP pathway; isopentenyl diphosphate from 1-deoxy-D-xylulose 5-phosphate: step 5/6. Its function is as follows. Converts 2C-methyl-D-erythritol 2,4-cyclodiphosphate (ME-2,4cPP) into 1-hydroxy-2-methyl-2-(E)-butenyl 4-diphosphate. The protein is 4-hydroxy-3-methylbut-2-en-1-yl diphosphate synthase (flavodoxin) of Mycobacterium bovis (strain BCG / Pasteur 1173P2).